A 245-amino-acid polypeptide reads, in one-letter code: MSHSGSVLRRNGFTFKQFFVAHDRCAMKVGTDGILLGAWAPVADVKRILDIGTGSGLLALMLAQRTDDNVPVDAVELDAEAAMQAQENVAHSPWAHRITVHTDDIQRWAPRQTVRFDLIISNPPYYEPGVECATPQREQARYTATLDHQTLLAIAADCITEDGFLCVVLPEQIGNAFTQQALSMGWHLRLRTDVAENEARLPHRVLLAFSPQAGECFSDRLVIRGPDQHYSESYTALTQAFYLFM.

This sequence belongs to the methyltransferase superfamily. tRNA (adenine-N(6)-)-methyltransferase family.

The protein resides in the cytoplasm. It catalyses the reaction adenosine(37) in tRNA1(Val) + S-adenosyl-L-methionine = N(6)-methyladenosine(37) in tRNA1(Val) + S-adenosyl-L-homocysteine + H(+). Its function is as follows. Specifically methylates the adenine in position 37 of tRNA(1)(Val) (anticodon cmo5UAC). This chain is tRNA1(Val) (adenine(37)-N6)-methyltransferase, found in Salmonella arizonae (strain ATCC BAA-731 / CDC346-86 / RSK2980).